Here is a 312-residue protein sequence, read N- to C-terminus: Ribosomal RNA small subunit methyltransferase H (312 aa).

S-adenosyl-L-methionine contacts are provided by residues 32 to 34, Asp-52, Phe-79, Asp-100, and Gln-107; that span reads AGH.

This sequence belongs to the methyltransferase superfamily. RsmH family.

It localises to the cytoplasm. It carries out the reaction cytidine(1402) in 16S rRNA + S-adenosyl-L-methionine = N(4)-methylcytidine(1402) in 16S rRNA + S-adenosyl-L-homocysteine + H(+). Functionally, specifically methylates the N4 position of cytidine in position 1402 (C1402) of 16S rRNA. This is Ribosomal RNA small subunit methyltransferase H from Listeria monocytogenes serotype 4b (strain F2365).